The primary structure comprises 550 residues: MSWGTELWDQFDNLEKHTQWGIDFLDKYAKFVKERLEIEQNYAKQLRNLVKKYCPKRSAKDEEPRFTSCLSFYNILNELNDYAGQREVVAEEMGHRVYAEIMRYSNDIKGERKSHLQEGRKAQQYLDMCLKQMDNSKRKFERECREAEKAQQTYERLDNDSNATKSDVEKAKQQLHLRTHMADESKNEYAAQLQNYNAEQHKHFYIVIPQVYKHLQEMDERRTVKLSECYKGFADAERKVIPIISKCLEGMVQAAKSVDERRDSQIVVDCFKSGFEPNGDYPFEDYSQHIYRTVSDGTISTPKQESLKPDPRVTVGKAKGKLWLFGKKPKGPALEDFSHLPPEQRRKRLQQRIDELSRELQKEMDQKDALNKMKDVYEKNPQMGDPSSLHPKIAETTSNIERLRMEIHKNEAWLSEVEGKVSQRSERRHSAEANHLVAQGRESPEGSYTEDANQEGRVQPQPHAHPEFDDEFDDDEPLPAIGHCKSLYPFDGNNEGTLAMKEGEVLYIIEEDKGDGWTRARKQNGEEGYVPTSYIDITLEKNSKGAVTYI.

An F-BAR domain is found at 1–263 (MSWGTELWDQ…AAKSVDERRD (263 aa)). Coiled-coil stretches lie at residues 66-258 (FTSC…AKSV) and 334-426 (LEDF…QRSE). The region spanning 339 to 416 (HLPPEQRRKR…IHKNEAWLSE (78 aa)) is the REM-1 domain. Basic and acidic residues predominate over residues 423–432 (QRSERRHSAE). Residues 423–467 (QRSERRHSAEANHLVAQGRESPEGSYTEDANQEGRVQPQPHAHPE) form a disordered region. Positions 479-540 (PAIGHCKSLY…PTSYIDITLE (62 aa)) constitute an SH3 domain.

It belongs to the FNBP1 family. As to quaternary structure, homodimerizes, the dimers can polymerize end-to-end to form filamentous structures. Interacts with GTP-bound cdc42 and wasl/n-wasp.

The protein resides in the cytoplasm. It is found in the cytoskeleton. Its subcellular location is the cell cortex. It localises to the cytoplasmic vesicle. The protein localises to the cell membrane. Functionally, required to coordinate membrane tubulation with reorganization of the actin cytoskeleton during endocytosis. Promotes cdc42-induced actin polymerization by activating the wasl-waspip complex, the predominant form of wasl/n-wasp in cells. Essential for autophagy of intracellular bacterial pathogens. In Xenopus tropicalis (Western clawed frog), this protein is Formin-binding protein 1-like (fnbp1l).